A 709-amino-acid chain; its full sequence is Ribosomal RNA large subunit methyltransferase K/L (709 aa).

Residues 43–154 (LAYRITLWTR…NGVITIAMNF (112 aa)) form the THUMP domain.

It belongs to the methyltransferase superfamily. RlmKL family.

Its subcellular location is the cytoplasm. It carries out the reaction guanosine(2445) in 23S rRNA + S-adenosyl-L-methionine = N(2)-methylguanosine(2445) in 23S rRNA + S-adenosyl-L-homocysteine + H(+). The enzyme catalyses guanosine(2069) in 23S rRNA + S-adenosyl-L-methionine = N(2)-methylguanosine(2069) in 23S rRNA + S-adenosyl-L-homocysteine + H(+). Functionally, specifically methylates the guanine in position 2445 (m2G2445) and the guanine in position 2069 (m7G2069) of 23S rRNA. This Shewanella sp. (strain W3-18-1) protein is Ribosomal RNA large subunit methyltransferase K/L.